An 837-amino-acid chain; its full sequence is Semaphorin-4B (837 aa).

An N-terminal signal peptide occupies residues 1–43 (MLRTAMGLRSWLAAPWGALPPRPPLLLLLLLLLLLQPPPPTWA). The Extracellular portion of the chain corresponds to 44–717 (LSPRISLPLG…WGADRSYWKE (674 aa)). A Sema domain is found at 47-523 (RISLPLGSEE…SHSGVVQVPM (477 aa)). 2 N-linked (GlcNAc...) asparagine glycosylation sites follow: asparagine 69 and asparagine 96. Cystine bridges form between cysteine 120-cysteine 131 and cysteine 149-cysteine 158. Asparagine 165 is a glycosylation site (N-linked (GlcNAc...) asparagine). Disulfide bonds link cysteine 286/cysteine 399 and cysteine 310/cysteine 359. Asparagine 410 and asparagine 525 each carry an N-linked (GlcNAc...) asparagine glycan. Residues 525-579 (NCSLYRSCGDCLLARDPYCAWSGSSCKHVSLYQPQLATRPWIQDIEGASAKDLCS) form the PSI domain. Disulfide bonds link cysteine 526–cysteine 543 and cysteine 611–cysteine 656. Residues 604-663 (NTVNTLACPLLSNLATRLWLRNGAPVNASASCHVLPTGDLLLVGTQQLGEFQCWSLEEGF) form the Ig-like C2-type domain. N-linked (GlcNAc...) asparagine glycosylation occurs at asparagine 630. The helical transmembrane segment at 718-738 (FLVMCTLFVLAVLLPVLFLLY) threads the bilayer. Topologically, residues 739–837 (RHRNSMKVFL…LGSEIRDSVV (99 aa)) are cytoplasmic. The disordered stretch occupies residues 767–805 (PETRPLNGLGPPSTPLDHRGYQSLSDSPPGSRVFTESEK). 3 positions are modified to phosphoserine: serine 793, serine 818, and serine 830.

It belongs to the semaphorin family.

The protein resides in the membrane. In terms of biological role, inhibits axonal extension by providing local signals to specify territories inaccessible for growing axons. The sequence is that of Semaphorin-4B from Homo sapiens (Human).